The sequence spans 82 residues: Small ribosomal subunit protein bS16 (82 aa).

This sequence belongs to the bacterial ribosomal protein bS16 family.

The chain is Small ribosomal subunit protein bS16 from Acidobacterium capsulatum (strain ATCC 51196 / DSM 11244 / BCRC 80197 / JCM 7670 / NBRC 15755 / NCIMB 13165 / 161).